A 937-amino-acid polypeptide reads, in one-letter code: DNA mismatch repair protein msh-2 (937 aa).

Residue 659–666 (GPNMGGKS) coordinates ATP.

It belongs to the DNA mismatch repair MutS family. Heterodimer of msh2 and msh6.

The protein resides in the nucleus. In terms of biological role, involved in post-replicative DNA-mismatch repair. Binds to mismatch-containing DNA. The sequence is that of DNA mismatch repair protein msh-2 (msh-2) from Neurospora crassa (strain ATCC 24698 / 74-OR23-1A / CBS 708.71 / DSM 1257 / FGSC 987).